Here is a 304-residue protein sequence, read N- to C-terminus: Mas-related G-protein coupled receptor member A1 (304 aa).

At 1–17 (MDNTIPGGINITILIPN) the chain is on the extracellular side. An N-linked (GlcNAc...) asparagine glycan is attached at Asn10. Residues 18–38 (LMIIIFGLVGLTGNGIVFWLL) traverse the membrane as a helical segment. At 39-53 (GFCLHRNAFSVYILN) the chain is on the cytoplasmic side. Residues 54–74 (LALADFFFLLGHIIDSILLLL) form a helical membrane-spanning segment. Position 75 (Asn75) is a topological domain, extracellular. The helical transmembrane segment at 76–96 (VFYPITFLLCFYTIMMVLYIA) threads the bilayer. Residues 97 to 131 (GLSMLSAISTERCLSVLCPIWYHCHRPEHTSTVMC) are Cytoplasmic-facing. Residues 132-152 (AVIWVLSLLICILNSYFCGFL) traverse the membrane as a helical segment. Over 153 to 166 (NTQYKNENGCLALN) the chain is Extracellular. Residues 167 to 187 (FFTAAYLMFLFVVLCLSSLAL) form a helical membrane-spanning segment. The Cytoplasmic portion of the chain corresponds to 188-206 (VARLFCGTGQIKLTRLYVT). The chain crosses the membrane as a helical span at residues 207 to 227 (IILSILVFLLCGLPFGIHWFL). The Extracellular segment spans residues 228–243 (LFKIKDDFHVFDLGFY). Residues 244–264 (LASVVLTAINSCANPIIYFFV) form a helical membrane-spanning segment. Over 265–304 (GSFRHRLKHQTLKMVLQNALQDTPETAKIMVEMSRSKSEP) the chain is Cytoplasmic.

The protein belongs to the G-protein coupled receptor 1 family. Mas subfamily. As to expression, expressed in a subset of sensory neurons that includes nociceptors. Expressed in the subclass of non-peptidergic sensory neurons that are IB4(+) and VR1(-).

It is found in the cell membrane. Orphan receptor activated by a subset of RFamide-family neuropeptides such as FLRF-amide and FMRF-amide. Mediates its action by association with G proteins that activate a phosphatidylinositol-calcium second messenger system. Its effect is mediated by G(q) and G(11) proteins. May regulate the function of nociceptive neurons by modulation of pain perception. This Mus musculus (Mouse) protein is Mas-related G-protein coupled receptor member A1 (Mrgpra1).